The chain runs to 291 residues: 4-diphosphocytidyl-2-C-methyl-D-erythritol kinase (291 aa).

Lys-10 is an active-site residue. Pro-94–Ser-104 provides a ligand contact to ATP. Residue Asp-136 is part of the active site.

It belongs to the GHMP kinase family. IspE subfamily.

It catalyses the reaction 4-CDP-2-C-methyl-D-erythritol + ATP = 4-CDP-2-C-methyl-D-erythritol 2-phosphate + ADP + H(+). Its pathway is isoprenoid biosynthesis; isopentenyl diphosphate biosynthesis via DXP pathway; isopentenyl diphosphate from 1-deoxy-D-xylulose 5-phosphate: step 3/6. In terms of biological role, catalyzes the phosphorylation of the position 2 hydroxy group of 4-diphosphocytidyl-2C-methyl-D-erythritol. In Listeria monocytogenes serotype 4a (strain HCC23), this protein is 4-diphosphocytidyl-2-C-methyl-D-erythritol kinase.